A 107-amino-acid chain; its full sequence is MMKVLVVVALLVTLISYSSSEGIDDLEADELLSLMANEQTRKECIPKHHECTSNKHSCCRGNFFKYKCQCTTVVTQDGEQTERCFCGTPPHHKAAELVVGFGKKIFG.

The N-terminal stretch at 1–20 is a signal peptide; sequence MMKVLVVVALLVTLISYSSS. The propeptide occupies 21 to 41; the sequence is EGIDDLEADELLSLMANEQTR. 4 disulfide bridges follow: Cys44-Cys59, Cys51-Cys68, Cys58-Cys86, and Cys70-Cys84.

This sequence belongs to the neurotoxin 19 (CSTX) family. 04 (U1-Lctx) subfamily. Expressed by the venom gland.

Its subcellular location is the secreted. This Lycosa singoriensis (Wolf spider) protein is U1-lycotoxin-Ls1s.